The sequence spans 315 residues: Acetyl-coenzyme A carboxylase carboxyl transferase subunit alpha (315 aa).

Residues 38–292 form the CoA carboxyltransferase C-terminal domain; it reads RLQKKSNELT…KLRLKEDLAE (255 aa).

It belongs to the AccA family. As to quaternary structure, acetyl-CoA carboxylase is a heterohexamer composed of biotin carboxyl carrier protein (AccB), biotin carboxylase (AccC) and two subunits each of ACCase subunit alpha (AccA) and ACCase subunit beta (AccD).

It localises to the cytoplasm. It catalyses the reaction N(6)-carboxybiotinyl-L-lysyl-[protein] + acetyl-CoA = N(6)-biotinyl-L-lysyl-[protein] + malonyl-CoA. It participates in lipid metabolism; malonyl-CoA biosynthesis; malonyl-CoA from acetyl-CoA: step 1/1. In terms of biological role, component of the acetyl coenzyme A carboxylase (ACC) complex. First, biotin carboxylase catalyzes the carboxylation of biotin on its carrier protein (BCCP) and then the CO(2) group is transferred by the carboxyltransferase to acetyl-CoA to form malonyl-CoA. This chain is Acetyl-coenzyme A carboxylase carboxyl transferase subunit alpha, found in Haemophilus influenzae (strain PittEE).